The following is a 660-amino-acid chain: Pentatricopeptide repeat-containing protein At4g20090 (660 aa).

PPR repeat units lie at residues 76–110 (GDSTLSSMIESYANSGDFDSVEKLLSRIRLENRVI), 111–141 (IERSFIVVFRAYGKAHLPDKAVDLFHRMVDE), 147–181 (SVKSFNSVLNVIINEGLYHRGLEFYDYVVNSNMNM), 186–220 (NGLSFNLVIKALCKLRFVDRAIEVFRGMPERKCLP), 221–255 (DGYTYCTLMDGLCKEERIDEAVLLLDEMQSEGCSP), 256–290 (SPVIYNVLIDGLCKKGDLTRVTKLVDNMFLKGCVP), 291–325 (NEVTYNTLIHGLCLKGKLDKAVSLLERMVSSKCIP), 326–360 (NDVTYGTLINGLVKQRRATDAVRLLSSMEERGYHL), 361–395 (NQHIYSVLISGLFKEGKAEEAMSLWRKMAEKGCKP), 396–430 (NIVVYSVLVDGLCREGKPNEAKEILNRMIASGCLP), 431–465 (NAYTYSSLMKGFFKTGLCEEAVQVWKEMDKTGCSR), 466–500 (NKFCYSVLIDGLCGVGRVKEAMMVWSKMLTIGIKP), 501–535 (DTVAYSSIIKGLCGIGSMDAALKLYHEMLCQEEPK), 539–573 (DVVTYNILLDGLCMQKDISRAVDLLNSMLDRGCDP), and 574–609 (DVITCNTFLNTLSEKSNSCDKGRSFLEELVVRLLKR).

The protein belongs to the PPR family. P subfamily.

Its function is as follows. May play a role in embryogenesis. This Arabidopsis thaliana (Mouse-ear cress) protein is Pentatricopeptide repeat-containing protein At4g20090 (EMB1025).